The chain runs to 329 residues: Phosphate acyltransferase (329 aa).

The protein belongs to the PlsX family. Homodimer. Probably interacts with PlsY.

It is found in the cytoplasm. It catalyses the reaction a fatty acyl-[ACP] + phosphate = an acyl phosphate + holo-[ACP]. Its pathway is lipid metabolism; phospholipid metabolism. Its function is as follows. Catalyzes the reversible formation of acyl-phosphate (acyl-PO(4)) from acyl-[acyl-carrier-protein] (acyl-ACP). This enzyme utilizes acyl-ACP as fatty acyl donor, but not acyl-CoA. In Sulfurovum sp. (strain NBC37-1), this protein is Phosphate acyltransferase.